We begin with the raw amino-acid sequence, 74 residues long: Tetrahydromethanopterin S-methyltransferase subunit G (74 aa).

Residues 50–70 (IGILYGLVIGLYLCMLYILLG) form a helical membrane-spanning segment.

This sequence belongs to the MtrG family. The complex is composed of 8 subunits; MtrA, MtrB, MtrC, MtrD, MtrE, MtrF, MtrG and MtrH.

The protein localises to the cell membrane. It carries out the reaction 5-methyl-5,6,7,8-tetrahydromethanopterin + coenzyme M + 2 Na(+)(in) = 5,6,7,8-tetrahydromethanopterin + methyl-coenzyme M + 2 Na(+)(out). Its pathway is one-carbon metabolism; methanogenesis from CO(2); methyl-coenzyme M from 5,10-methylene-5,6,7,8-tetrahydromethanopterin: step 2/2. In terms of biological role, part of a complex that catalyzes the formation of methyl-coenzyme M and tetrahydromethanopterin from coenzyme M and methyl-tetrahydromethanopterin. This is an energy-conserving, sodium-ion translocating step. The protein is Tetrahydromethanopterin S-methyltransferase subunit G of Methanopyrus kandleri (strain AV19 / DSM 6324 / JCM 9639 / NBRC 100938).